The following is a 582-amino-acid chain: NAB transcription cofactor mab-10 (582 aa).

Residues 1–70 (MSSSSSSSLP…SSSSQRQSTS (70 aa)) show a composition bias toward low complexity. Disordered regions lie at residues 1–84 (MSSS…MPTP), 257–287 (SDQQ…PAGI), 333–365 (PPSS…SPFL), and 516–582 (SRKR…LPES). The interval 83 to 161 (TPTTLSEWQL…EYSQDQTAFN (79 aa)) is NCD1. 2 stretches are compositionally biased toward low complexity: residues 257–276 (SDQQ…STSS) and 333–345 (PPSS…PSTS). The segment at 396 to 519 (LSTAQISRLA…GYNYAKSRKR (124 aa)) is NCD2. Basic and acidic residues predominate over residues 573 to 582 (EKMKGELPES).

This sequence belongs to the NAB family. Interacts with transcription factor lin-29 (via C-terminus).

Its subcellular location is the nucleus. Its function is as follows. Transcriptional cofactor. Heterochronic protein, involved in timing of a subset of differentiation events during the larval-to-adult transition. Promotes hypodermal terminal differentiation, together with transcription factor lin-29, perhaps as part of a transcriptional complex. Involved in regulating molting by repressing the expression of nuclear hormone receptors nhr-23 and nhr-25 in the adult hypoderm, probably acting in concert with lin-29. The protein is NAB transcription cofactor mab-10 of Caenorhabditis elegans.